The primary structure comprises 130 residues: Small ribosomal subunit protein uS8 (130 aa).

The protein belongs to the universal ribosomal protein uS8 family. In terms of assembly, part of the 30S ribosomal subunit. Contacts proteins S5 and S12.

Functionally, one of the primary rRNA binding proteins, it binds directly to 16S rRNA central domain where it helps coordinate assembly of the platform of the 30S subunit. This chain is Small ribosomal subunit protein uS8, found in Enterobacter sp. (strain 638).